The following is a 900-amino-acid chain: Phosphoenolpyruvate carboxylase (900 aa).

Residues His140 and Lys568 contribute to the active site.

It belongs to the PEPCase type 1 family. It depends on Mg(2+) as a cofactor.

The enzyme catalyses oxaloacetate + phosphate = phosphoenolpyruvate + hydrogencarbonate. Functionally, forms oxaloacetate, a four-carbon dicarboxylic acid source for the tricarboxylic acid cycle. This is Phosphoenolpyruvate carboxylase from Neisseria meningitidis serogroup A / serotype 4A (strain DSM 15465 / Z2491).